We begin with the raw amino-acid sequence, 450 residues long: Probable glycosidase CRR1 (450 aa).

Residues 1–17 form the signal peptide; it reads MSKRIIQLILLSAFARA. A GH16 domain is found at 67 to 347; the sequence is SPESCVPVPA…WENAPDIKAH (281 aa). Catalysis depends on Glu225, which acts as the Nucleophile. Glu229 functions as the Proton donor in the catalytic mechanism. A disordered region spans residues 428 to 450; sequence AQRQQHHRRSLPHVEAPPITNTM.

Belongs to the glycosyl hydrolase 16 family. CRR1 subfamily.

It is found in the spore wall. In terms of biological role, spore specific glycosidase involved in spore wall assembly during sporulation. May be involved in copper import. This chain is Probable glycosidase CRR1 (CRR1), found in Eremothecium gossypii (strain ATCC 10895 / CBS 109.51 / FGSC 9923 / NRRL Y-1056) (Yeast).